A 278-amino-acid chain; its full sequence is Hydroxyethylthiazole kinase (278 aa).

M51 contacts substrate. R127 and S173 together coordinate ATP. G201 contributes to the substrate binding site.

The protein belongs to the Thz kinase family. The cofactor is Mg(2+).

The catalysed reaction is 5-(2-hydroxyethyl)-4-methylthiazole + ATP = 4-methyl-5-(2-phosphooxyethyl)-thiazole + ADP + H(+). It functions in the pathway cofactor biosynthesis; thiamine diphosphate biosynthesis; 4-methyl-5-(2-phosphoethyl)-thiazole from 5-(2-hydroxyethyl)-4-methylthiazole: step 1/1. Its function is as follows. Catalyzes the phosphorylation of the hydroxyl group of 4-methyl-5-beta-hydroxyethylthiazole (THZ). This chain is Hydroxyethylthiazole kinase, found in Leptothrix cholodnii (strain ATCC 51168 / LMG 8142 / SP-6) (Leptothrix discophora (strain SP-6)).